A 105-amino-acid polypeptide reads, in one-letter code: Large ribosomal subunit protein bL34m (105 aa).

Residues 1-16 (MPLFARLCQPQSRRMF) constitute a mitochondrion transit peptide.

Belongs to the bacterial ribosomal protein bL34 family. In terms of assembly, component of the mitochondrial large ribosomal subunit (mt-LSU). Mature yeast 74S mitochondrial ribosomes consist of a small (37S) and a large (54S) subunit. The 37S small subunit contains a 15S ribosomal RNA (15S mt-rRNA) and 34 different proteins. The 54S large subunit contains a 21S rRNA (21S mt-rRNA) and 46 different proteins.

It is found in the mitochondrion. In terms of biological role, component of the mitochondrial ribosome (mitoribosome), a dedicated translation machinery responsible for the synthesis of mitochondrial genome-encoded proteins, including at least some of the essential transmembrane subunits of the mitochondrial respiratory chain. The mitoribosomes are attached to the mitochondrial inner membrane and translation products are cotranslationally integrated into the membrane. This Saccharomyces cerevisiae (strain ATCC 204508 / S288c) (Baker's yeast) protein is Large ribosomal subunit protein bL34m.